A 328-amino-acid polypeptide reads, in one-letter code: Malate dehydrogenase (328 aa).

12–18 (GAAGQIG) lines the NAD(+) pocket. Residues R95 and R101 each coordinate substrate. Residues N108, Q115, and 132–134 (VGN) contribute to the NAD(+) site. Residues N134 and R165 each coordinate substrate. Catalysis depends on H190, which acts as the Proton acceptor.

It belongs to the LDH/MDH superfamily. MDH type 2 family.

The enzyme catalyses (S)-malate + NAD(+) = oxaloacetate + NADH + H(+). Catalyzes the reversible oxidation of malate to oxaloacetate. In Leptothrix cholodnii (strain ATCC 51168 / LMG 8142 / SP-6) (Leptothrix discophora (strain SP-6)), this protein is Malate dehydrogenase.